The following is a 277-amino-acid chain: MENNETSVDSKSIKNFEVKTIHGSKSMDSGIYLDSSYKMDYPEMGVCIIINNKNFHKSTGMTPRSGTDVDAAKLRETFMALKYEVRNKNDLTREEIVELMKNASKEDHSKRSSFVCVILSHGDEGVIFGTDGPIDLKKLTSYFRGDYCRSLIGKPKLFIIQACRGTELDCGIETDSGTEDDMTCQKIPVEADFLYAYSTAPGYYSWRNPKDGSWFIQSLCSMLKLYAHKLEFMHILTRVNRKVATEFESFSLDSTFHAKKQIPCIVSMLTKELYFYH.

Met1 is modified (N-acetylmethionine). 2 propeptides span residues 1–9 (MENNETSVD) and 10–28 (SKSIKNFEVKTIHGSKSMD). Lys11 is modified (N6-acetyllysine). A Phosphoserine modification is found at Ser26. Residues His121 and Cys163 contribute to the active site. Cys163 carries the S-nitrosocysteine; in inhibited form modification.

It belongs to the peptidase C14A family. Heterotetramer that consists of two anti-parallel arranged heterodimers, each one formed by a 17 kDa (p17) and a 12 kDa (p12) subunit. Interacts with BIRC6/bruce. In terms of processing, cleavage by granzyme B, caspase-6, caspase-8 and caspase-10 generates the two active subunits. Additional processing of the propeptides is likely due to the autocatalytic activity of the activated protease. Active heterodimers between the small subunit of caspase-7 protease and the large subunit of caspase-3 also occur and vice versa. Post-translationally, S-nitrosylated on its catalytic site cysteine in unstimulated cell lines and denitrosylated upon activation of the Fas apoptotic pathway, associated with an increase in intracellular caspase activity. Fas therefore activates caspase-3 not only by inducing the cleavage of the caspase zymogen to its active subunits, but also by stimulating the denitrosylation of its active site thiol. Ubiquitinated by BIRC6; this activity is inhibited by DIABLO/SMAC.

It is found in the cytoplasm. The catalysed reaction is Strict requirement for an Asp residue at positions P1 and P4. It has a preferred cleavage sequence of Asp-Xaa-Xaa-Asp-|- with a hydrophobic amino-acid residue at P2 and a hydrophilic amino-acid residue at P3, although Val or Ala are also accepted at this position.. Its activity is regulated as follows. Inhibited by BIRC6; following inhibition of BIRC6-caspase binding by DIABLO/SMAC, BIRC6 is subjected to caspase cleavage, leading to an increase in active caspases. Its function is as follows. Involved in the activation cascade of caspases responsible for apoptosis execution. At the onset of apoptosis, it proteolytically cleaves poly(ADP-ribose) polymerase PARP1 at a '216-Asp-|-Gly-217' bond. Cleaves and activates sterol regulatory element binding proteins (SREBPs) between the basic helix-loop-helix leucine zipper domain and the membrane attachment domain. Cleaves and activates caspase-6, -7 and -9 (CASP6, CASP7 and CASP9, respectively). Cleaves and inactivates interleukin-18 (IL18). Triggers cell adhesion in sympathetic neurons through RET cleavage. Cleaves IL-1 beta between an Asp and an Ala, releasing the mature cytokine which is involved in a variety of inflammatory processes. Cleaves and inhibits serine/threonine-protein kinase AKT1 in response to oxidative stress. Acts as an inhibitor of type I interferon production during virus-induced apoptosis by mediating cleavage of antiviral proteins CGAS, IRF3 and MAVS, thereby preventing cytokine overproduction. Also involved in pyroptosis by mediating cleavage and activation of gasdermin-E (GSDME). Cleaves XRCC4 and phospholipid scramblase proteins XKR4, XKR8 and XKR9, leading to promote phosphatidylserine exposure on apoptotic cell surface. Cleaves BIRC6 following inhibition of BIRC6-caspase binding by DIABLO/SMAC. This Mesocricetus auratus (Golden hamster) protein is Caspase-3 (CASP3).